Here is a 429-residue protein sequence, read N- to C-terminus: Serine/threonine-protein kinase BGLF4 (429 aa).

The disordered stretch occupies residues 1–27 (MDVNMAAELSPTNSSSSGELSVSPEPP). The Protein kinase domain maps to 1-409 (MDVNMAAELS…CRPRFEHPHL (409 aa)). Low complexity predominate over residues 14–23 (SSSSGELSVS). The segment at 36 to 40 (KVTVI) is SUMO interaction motif. ATP contacts are provided by residues 110 to 118 (LYHELMVCD) and Glu-128. The Proton acceptor role is filled by Asp-195. The SUMO interaction motif stretch occupies residues 344–350 (VVLLEVL).

It belongs to the protein kinase superfamily. Ser/Thr protein kinase family. Interacts with host NUP62 and NUP153; this interaction plays a role in nuclear targeting of BGLF4. Interacts with host SUMO1 and SUMO2.

It localises to the virion tegument. The protein resides in the host nucleus. The catalysed reaction is L-seryl-[protein] + ATP = O-phospho-L-seryl-[protein] + ADP + H(+). It carries out the reaction L-threonyl-[protein] + ATP = O-phospho-L-threonyl-[protein] + ADP + H(+). Functionally, plays many key roles by phosphorylating several proteins including the viral DNA processivity factor BMRF1, EBNA1 or EBNA2. Modifies the host nuclear envelope structure and induces the redistribution of nuclear envelope-associated proteins by phosphorylating host nucleoporins. Subsequently, promotes the nuclear transport of EBV lytic proteins. Required for efficient lytic DNA replication and release of nucleocapsids from the nucleus. Contributes to the compaction of host cell chromatin in cells undergoing lytic replication, presumably by phosphorylating the host condensin complex and host TOP2A. Induces disassembly of the nuclear lamina by phosphorylating with host LMNA. Phosphorylates substrates involved in capsid assembly and DNA packaging. Facilitates the switch from latent to lytic DNA replication by down-regulating EBNA1 replication function. Phosphorylates the viral immediate-early protein BZLF1 and inhibits its sumoylation by interacting with host SUMO1 and SUMO2. Phosphorylates also host SAMHD1 and thereby counteracts its antiviral effect by reducing its dNTP hydrolase activity. This is Serine/threonine-protein kinase BGLF4 from Epstein-Barr virus (strain AG876) (HHV-4).